The chain runs to 87 residues: MDPVDPNLEPWNHPGSQPRTPCNKCYCKKCCYHCQMCFITKGLGISYGRKKRRQRRRPPQGNQAHQDPLPEQPSSQHRGDHPTGPKE.

Positions 1-21 are disordered; the sequence is MDPVDPNLEPWNHPGSQPRTP. An interaction with human CREBBP region spans residues 1-24; sequence MDPVDPNLEPWNHPGSQPRTPCNK. Residues 1 to 48 are transactivation; sequence MDPVDPNLEPWNHPGSQPRTPCNKCYCKKCCYHCQMCFITKGLGISYG. Positions 22, 25, and 27 each coordinate Zn(2+). A cysteine-rich region spans residues 22 to 37; it reads CNKCYCKKCCYHCQMC. Lys28 bears the N6-acetyllysine; by host PCAF mark. Zn(2+) contacts are provided by Cys30, His33, Cys34, and Cys37. A core region spans residues 38-48; that stretch reads FITKGLGISYG. Residues 45–87 form a disordered region; the sequence is ISYGRKKRRQRRRPPQGNQAHQDPLPEQPSSQHRGDHPTGPKE. The segment covering 48–58 has biased composition (basic residues); sequence GRKKRRQRRRP. A Nuclear localization signal, RNA-binding (TAR), and protein transduction motif is present at residues 49–57; sequence RKKRRQRRR. The interaction with the host capping enzyme RNGTT stretch occupies residues 49–87; that stretch reads RKKRRQRRRPPQGNQAHQDPLPEQPSSQHRGDHPTGPKE. Residues Lys50 and Lys51 each carry the N6-acetyllysine; by host EP300 and GCN5L2 modification. An asymmetric dimethylarginine; by host PRMT6 mark is found at Arg52 and Arg53. Residues 77 to 87 are compositionally biased toward basic and acidic residues; it reads HRGDHPTGPKE. Positions 78 to 80 match the Cell attachment site motif; it reads RGD.

Belongs to the lentiviruses Tat family. Interacts with host CCNT1. Associates with the P-TEFb complex composed at least of Tat, P-TEFb (CDK9 and CCNT1), TAR RNA, RNA Pol II. Recruits the HATs CREBBP, TAF1/TFIID, EP300, PCAF and GCN5L2. Interacts with host KAT5/Tip60; this interaction targets the latter to degradation. Interacts with the host deacetylase SIRT1. Interacts with host capping enzyme RNGTT; this interaction stimulates RNGTT. Binds to host KDR, and to the host integrins ITGAV/ITGB3 and ITGA5/ITGB1. Interacts with host KPNB1/importin beta-1 without previous binding to KPNA1/importin alpha-1. Interacts with EIF2AK2. Interacts with host nucleosome assembly protein NAP1L1; this interaction may be required for the transport of Tat within the nucleus, since the two proteins interact at the nuclear rim. Interacts with host C1QBP/SF2P32; this interaction involves lysine-acetylated Tat. Interacts with the host chemokine receptors CCR2, CCR3 and CXCR4. Interacts with host DPP4/CD26; this interaction may trigger an anti-proliferative effect. Interacts with host LDLR. Interacts with the host extracellular matrix metalloproteinase MMP1. Interacts with host PRMT6; this interaction mediates Tat's methylation. Interacts with, and is ubiquitinated by MDM2/Hdm2. Interacts with host PSMC3 and HTATIP2. Interacts with STAB1; this interaction may overcome SATB1-mediated repression of IL2 and IL2RA (interleukin) in T cells by binding to the same domain than HDAC1. Interacts (when acetylated) with human CDK13, thereby increasing HIV-1 mRNA splicing and promoting the production of the doubly spliced HIV-1 protein Nef. Interacts with host TBP; this interaction modulates the activity of transcriptional pre-initiation complex. Interacts with host RELA. Interacts with host PLSCR1; this interaction negatively regulates Tat transactivation activity by altering its subcellular distribution. Asymmetrical arginine methylation by host PRMT6 seems to diminish the transactivation capacity of Tat and affects the interaction with host CCNT1. In terms of processing, acetylation by EP300, CREBBP, GCN5L2/GCN5 and PCAF regulates the transactivation activity of Tat. EP300-mediated acetylation of Lys-50 promotes dissociation of Tat from the TAR RNA through the competitive binding to PCAF's bromodomain. In addition, the non-acetylated Tat's N-terminus can also interact with PCAF. PCAF-mediated acetylation of Lys-28 enhances Tat's binding to CCNT1. Lys-50 is deacetylated by SIRT1. Post-translationally, polyubiquitination by host MDM2 does not target Tat to degradation, but activates its transactivation function and fosters interaction with CCNT1 and TAR RNA. Phosphorylated by EIF2AK2 on serine and threonine residues adjacent to the basic region important for TAR RNA binding and function. Phosphorylation of Tat by EIF2AK2 is dependent on the prior activation of EIF2AK2 by dsRNA.

The protein resides in the host nucleus. The protein localises to the host nucleolus. It localises to the host cytoplasm. It is found in the secreted. Its function is as follows. Transcriptional activator that increases RNA Pol II processivity, thereby increasing the level of full-length viral transcripts. Recognizes a hairpin structure at the 5'-LTR of the nascent viral mRNAs referred to as the transactivation responsive RNA element (TAR) and recruits the cyclin T1-CDK9 complex (P-TEFb complex) that will in turn hyperphosphorylate the RNA polymerase II to allow efficient elongation. The CDK9 component of P-TEFb and other Tat-activated kinases hyperphosphorylate the C-terminus of RNA Pol II that becomes stabilized and much more processive. Other factors such as HTATSF1/Tat-SF1, SUPT5H/SPT5, and HTATIP2 are also important for Tat's function. Besides its effect on RNA Pol II processivity, Tat induces chromatin remodeling of proviral genes by recruiting the histone acetyltransferases (HATs) CREBBP, EP300 and PCAF to the chromatin. This also contributes to the increase in proviral transcription rate, especially when the provirus integrates in transcriptionally silent region of the host genome. To ensure maximal activation of the LTR, Tat mediates nuclear translocation of NF-kappa-B by interacting with host RELA. Through its interaction with host TBP, Tat may also modulate transcription initiation. Tat can reactivate a latently infected cell by penetrating in it and transactivating its LTR promoter. In the cytoplasm, Tat is thought to act as a translational activator of HIV-1 mRNAs. Extracellular circulating Tat can be endocytosed by surrounding uninfected cells via the binding to several surface receptors such as CD26, CXCR4, heparan sulfate proteoglycans (HSPG) or LDLR. Neurons are rarely infected, but they internalize Tat via their LDLR. Through its interaction with nuclear HATs, Tat is potentially able to control the acetylation-dependent cellular gene expression. Modulates the expression of many cellular genes involved in cell survival, proliferation or in coding for cytokines or cytokine receptors. Tat plays a role in T-cell and neurons apoptosis. Tat induced neurotoxicity and apoptosis probably contribute to neuroAIDS. Circulating Tat also acts as a chemokine-like and/or growth factor-like molecule that binds to specific receptors on the surface of the cells, affecting many cellular pathways. In the vascular system, Tat binds to ITGAV/ITGB3 and ITGA5/ITGB1 integrins dimers at the surface of endothelial cells and competes with bFGF for heparin-binding sites, leading to an excess of soluble bFGF. The protein is Protein Tat of Homo sapiens (Human).